Here is a 698-residue protein sequence, read N- to C-terminus: SHC SH2 domain-binding protein 1 homolog B (698 aa).

3 PbH1 repeats span residues 480-502 (CAELLMKYSDLYGAKGAGMEIYP), 503-524 (GSKCTLIGNGIHHCRDGILIKD), and 532-554 (IPKIIMENNVIHNNEGYAVVLVK).

The protein localises to the midbody. It is found in the cytoplasm. It localises to the cytoskeleton. The protein resides in the spindle. Its function is as follows. May play a role in signaling pathways governing cellular proliferation. This Xenopus laevis (African clawed frog) protein is SHC SH2 domain-binding protein 1 homolog B (shcbp1-b).